A 396-amino-acid chain; its full sequence is THAP domain-containing protein 5 (396 aa).

The THAP-type zinc-finger motif lies at 2–85; that stretch reads MPRYCAAICC…LKQTAVPTIF (84 aa). The tract at residues 86–113 is disordered; it reads SLPEDNQGKDPSKKKSQKKNLEDEKEVC. The segment covering 91-113 has biased composition (basic and acidic residues); it reads NQGKDPSKKKSQKKNLEDEKEVC. The HCFC1-binding motif (HBM) motif lies at 322–325; sequence EHSY. Residues 349–382 adopt a coiled-coil conformation; sequence LELKEQQTLGRLKSLEALVRQLKQENWLSEENVK.

Interacts with HTRA2; under apoptotic conditions. Interacts with ABRAXAS2. In terms of processing, cleaved by HTRA2 during apoptosis.

Its subcellular location is the nucleus. In terms of biological role, has sequence-specific DNA-binding activity and can function as transcriptional repressor (in vitro). May be a regulator of cell cycle: THAP5 overexpression in human cell lines causes cell cycle arrest at G2/M phase. The polypeptide is THAP domain-containing protein 5 (THAP5) (Macaca fascicularis (Crab-eating macaque)).